The primary structure comprises 127 residues: Large ribosomal subunit protein bL19 (127 aa).

The protein belongs to the bacterial ribosomal protein bL19 family.

This protein is located at the 30S-50S ribosomal subunit interface and may play a role in the structure and function of the aminoacyl-tRNA binding site. The chain is Large ribosomal subunit protein bL19 from Paraburkholderia phymatum (strain DSM 17167 / CIP 108236 / LMG 21445 / STM815) (Burkholderia phymatum).